The primary structure comprises 393 residues: NAD(P)H-quinone oxidoreductase subunit H, chloroplastic (393 aa).

The protein belongs to the complex I 49 kDa subunit family. In terms of assembly, NDH is composed of at least 16 different subunits, 5 of which are encoded in the nucleus.

The protein resides in the plastid. It is found in the chloroplast thylakoid membrane. The catalysed reaction is a plastoquinone + NADH + (n+1) H(+)(in) = a plastoquinol + NAD(+) + n H(+)(out). The enzyme catalyses a plastoquinone + NADPH + (n+1) H(+)(in) = a plastoquinol + NADP(+) + n H(+)(out). In terms of biological role, NDH shuttles electrons from NAD(P)H:plastoquinone, via FMN and iron-sulfur (Fe-S) centers, to quinones in the photosynthetic chain and possibly in a chloroplast respiratory chain. The immediate electron acceptor for the enzyme in this species is believed to be plastoquinone. Couples the redox reaction to proton translocation, and thus conserves the redox energy in a proton gradient. This chain is NAD(P)H-quinone oxidoreductase subunit H, chloroplastic, found in Lactuca sativa (Garden lettuce).